Consider the following 334-residue polypeptide: MSLDINQIALHQLIKRDEQNLELVLRDSLLEPTDTVSEMVAELHRVYSAKNKAYGLFSEESELAQALRLQRQGEEDFLAFSRAATGRLRDELAKYPFADGGFVLFCHYRYLAVEYLLICVLNNLSSMRVNENLDINPTHYLDINHADIVARIDLTEWETNPESTRYLTFLKGRVGRKVADFFMDFLGASEGLNAKAQNRGLLQAVDDFTAEAQLDKAERQNVRQQVYSYCNEQLQAGEEIELESLSKELAGVSEVSFTEFAAEKGYELEESFPADRSTLRQLTKFAGSGGGLTINFDAMLLGERIFWDPATDTLTIKGTPPNLRDQLQRRTSGN.

This sequence belongs to the YejK family.

The protein localises to the cytoplasm. Its subcellular location is the nucleoid. The chain is Nucleoid-associated protein YejK from Escherichia fergusonii (strain ATCC 35469 / DSM 13698 / CCUG 18766 / IAM 14443 / JCM 21226 / LMG 7866 / NBRC 102419 / NCTC 12128 / CDC 0568-73).